A 93-amino-acid polypeptide reads, in one-letter code: Regulatory protein RepI (93 aa).

Functionally, this protein is involved in regulating the plasmid copy-number. Increasing the level of this protein results in a higher plasmid copy-number. The chain is Regulatory protein RepI (repI) from Escherichia coli.